A 192-amino-acid polypeptide reads, in one-letter code: Large ribosomal subunit protein uL3 (192 aa).

The protein belongs to the universal ribosomal protein uL3 family. In terms of assembly, part of the 50S ribosomal subunit. Forms a cluster with proteins L14 and L19.

One of the primary rRNA binding proteins, it binds directly near the 3'-end of the 23S rRNA, where it nucleates assembly of the 50S subunit. The chain is Large ribosomal subunit protein uL3 (rplC) from Helicobacter hepaticus (strain ATCC 51449 / 3B1).